The chain runs to 60 residues: UPF0434 protein YE1549 (60 aa).

The protein belongs to the UPF0434 family.

This is UPF0434 protein YE1549 from Yersinia enterocolitica serotype O:8 / biotype 1B (strain NCTC 13174 / 8081).